The sequence spans 171 residues: ATP synthase subunit b (171 aa).

Residues 26–48 form a helical membrane-spanning segment; sequence LINLAIIIGLLVYAGRGFLGNLL.

Belongs to the ATPase B chain family. F-type ATPases have 2 components, F(1) - the catalytic core - and F(0) - the membrane proton channel. F(1) has five subunits: alpha(3), beta(3), gamma(1), delta(1), epsilon(1). F(0) has four main subunits: a(1), b(1), b'(1) and c(10-14). The alpha and beta chains form an alternating ring which encloses part of the gamma chain. F(1) is attached to F(0) by a central stalk formed by the gamma and epsilon chains, while a peripheral stalk is formed by the delta, b and b' chains.

Its subcellular location is the cellular thylakoid membrane. Its function is as follows. F(1)F(0) ATP synthase produces ATP from ADP in the presence of a proton or sodium gradient. F-type ATPases consist of two structural domains, F(1) containing the extramembraneous catalytic core and F(0) containing the membrane proton channel, linked together by a central stalk and a peripheral stalk. During catalysis, ATP synthesis in the catalytic domain of F(1) is coupled via a rotary mechanism of the central stalk subunits to proton translocation. Component of the F(0) channel, it forms part of the peripheral stalk, linking F(1) to F(0). The protein is ATP synthase subunit b of Synechococcus elongatus (strain ATCC 33912 / PCC 7942 / FACHB-805) (Anacystis nidulans R2).